We begin with the raw amino-acid sequence, 403 residues long: Alkaline protease 1 (403 aa).

The N-terminal stretch at 1–21 is a signal peptide; the sequence is MLSIKRTLLLLGAVLPAVFGA. Residues 22-125 constitute a propeptide that is removed on maturation; sequence PVQETRRAAQ…QIWYIDALTT (104 aa). The Inhibitor I9 domain occupies 36–120; the sequence is KYIVTFKPGT…HVEEDQIWYI (85 aa). The 274-residue stretch at 130–403 folds into the Peptidase S8 domain; sequence PWGLGSISHK…PNKLAYNGNA (274 aa). Residues Asp-162 and His-193 each act as charge relay system in the active site. Asn-253 and Asn-307 each carry an N-linked (GlcNAc...) asparagine glycan. Ser-349 (charge relay system) is an active-site residue.

The protein belongs to the peptidase S8 family.

It is found in the secreted. It carries out the reaction Hydrolysis of proteins with broad specificity, and of Bz-Arg-OEt &gt; Ac-Tyr-OEt. Does not hydrolyze peptide amides.. Secreted alkaline protease that allows assimilation of proteinaceous substrates. This chain is Alkaline protease 1 (alp1), found in Neosartorya fischeri (strain ATCC 1020 / DSM 3700 / CBS 544.65 / FGSC A1164 / JCM 1740 / NRRL 181 / WB 181) (Aspergillus fischerianus).